A 193-amino-acid chain; its full sequence is MKIAIYGGSFNPMHIGHEKIVDYVLKNLDMDKIIIIPVGIPSHRENNLEQSDTRLKICKEIFKNNKKVEVSDIEIKAEGKSYTYDTLLKLIEIYGKDNEFFEIIGEDSLKNLKTWRNYKELLNLCKFIVFRRKDDKNIEIDNEFLNNKNIIILENEYYNISSTEIRNKVKNKEDISGLVNKKVKKLIEKEYID.

It belongs to the NadD family.

It catalyses the reaction nicotinate beta-D-ribonucleotide + ATP + H(+) = deamido-NAD(+) + diphosphate. The protein operates within cofactor biosynthesis; NAD(+) biosynthesis; deamido-NAD(+) from nicotinate D-ribonucleotide: step 1/1. Its function is as follows. Catalyzes the reversible adenylation of nicotinate mononucleotide (NaMN) to nicotinic acid adenine dinucleotide (NaAD). The sequence is that of Probable nicotinate-nucleotide adenylyltransferase from Fusobacterium nucleatum subsp. nucleatum (strain ATCC 25586 / DSM 15643 / BCRC 10681 / CIP 101130 / JCM 8532 / KCTC 2640 / LMG 13131 / VPI 4355).